Consider the following 866-residue polypeptide: DNA mismatch repair protein MutS (866 aa).

613 to 620 (GPNMGGKS) provides a ligand contact to ATP.

This sequence belongs to the DNA mismatch repair MutS family.

This protein is involved in the repair of mismatches in DNA. It is possible that it carries out the mismatch recognition step. This protein has a weak ATPase activity. This is DNA mismatch repair protein MutS from Haemophilus ducreyi (strain 35000HP / ATCC 700724).